The sequence spans 154 residues: MKAQKGFTLIELMIVVAIIGILAAIAIPQYQDYTARTQVTRAVSEVSALKTAAESAILEGKEIVSSATPKDTQYDIGFTESTLLDGSGKSQIQVTDNKDGTVELVATLGKSSGSAIKGAVITVSRKNDGVWNCKITKTPTAWKPNYAPANCPKS.

Residues 1–6 constitute a propeptide, leader sequence; the sequence is MKAQKG. An N-methylphenylalanine modification is found at F7. The chain crosses the membrane as a helical span at residues 7-27; sequence FTLIELMIVVAIIGILAAIAI. C133 and C151 form a disulfide bridge.

The protein belongs to the N-Me-Phe pilin family. In terms of assembly, the pili are polar flexible filaments of about 5.4 nanometers diameter and 2.5 micrometers average length; they consist of only a single polypeptide chain arranged in a helical configuration of five subunits per turn in the assembled pilus.

The protein localises to the fimbrium. It is found in the membrane. The polypeptide is Fimbrial protein (pilA) (Pseudomonas aeruginosa).